The following is a 177-amino-acid chain: Large ribosomal subunit protein uL6 (177 aa).

The tract at residues 155 to 177 (EPYKGKGVKHADERIFRKEGKKK) is disordered.

The protein belongs to the universal ribosomal protein uL6 family. As to quaternary structure, part of the 50S ribosomal subunit.

In terms of biological role, this protein binds to the 23S rRNA, and is important in its secondary structure. It is located near the subunit interface in the base of the L7/L12 stalk, and near the tRNA binding site of the peptidyltransferase center. The polypeptide is Large ribosomal subunit protein uL6 (Bartonella tribocorum (strain CIP 105476 / IBS 506)).